The following is a 920-amino-acid chain: Isoleucine--tRNA ligase (920 aa).

Residues 58–68 (PYANGHLHLGH) carry the 'HIGH' region motif. Glutamate 569 provides a ligand contact to L-isoleucyl-5'-AMP. The 'KMSKS' region motif lies at 610–614 (KMSKS). Lysine 613 provides a ligand contact to ATP. The Zn(2+) site is built by cysteine 895, cysteine 898, cysteine 910, and cysteine 913.

It belongs to the class-I aminoacyl-tRNA synthetase family. IleS type 1 subfamily. Monomer. Zn(2+) serves as cofactor.

It is found in the cytoplasm. The catalysed reaction is tRNA(Ile) + L-isoleucine + ATP = L-isoleucyl-tRNA(Ile) + AMP + diphosphate. Catalyzes the attachment of isoleucine to tRNA(Ile). As IleRS can inadvertently accommodate and process structurally similar amino acids such as valine, to avoid such errors it has two additional distinct tRNA(Ile)-dependent editing activities. One activity is designated as 'pretransfer' editing and involves the hydrolysis of activated Val-AMP. The other activity is designated 'posttransfer' editing and involves deacylation of mischarged Val-tRNA(Ile). The chain is Isoleucine--tRNA ligase from Helicobacter pylori (strain G27).